A 282-amino-acid chain; its full sequence is Undecaprenyl-diphosphatase 1 (282 aa).

8 helical membrane passes run 1-21 (MLLL…VLPL), 46-66 (GVAL…LYFW), 91-111 (AFLV…LAHF), 117-137 (SPGL…LGVI), 150-170 (MGGI…LPGV), 193-213 (FSML…GLDL), 226-246 (LIAA…MMAW), and 260-280 (VLLG…APFL).

The protein belongs to the UppP family.

Its subcellular location is the cell inner membrane. The catalysed reaction is di-trans,octa-cis-undecaprenyl diphosphate + H2O = di-trans,octa-cis-undecaprenyl phosphate + phosphate + H(+). In terms of biological role, catalyzes the dephosphorylation of undecaprenyl diphosphate (UPP). Confers resistance to bacitracin. The protein is Undecaprenyl-diphosphatase 1 of Rhodospirillum rubrum (strain ATCC 11170 / ATH 1.1.1 / DSM 467 / LMG 4362 / NCIMB 8255 / S1).